We begin with the raw amino-acid sequence, 151 residues long: Deoxyuridine 5'-triphosphate nucleotidohydrolase (151 aa).

Residues 71 to 73 (RSG), Asn-84, and 88 to 90 (TID) contribute to the substrate site.

The protein belongs to the dUTPase family. Mg(2+) serves as cofactor.

It carries out the reaction dUTP + H2O = dUMP + diphosphate + H(+). Its pathway is pyrimidine metabolism; dUMP biosynthesis; dUMP from dCTP (dUTP route): step 2/2. This enzyme is involved in nucleotide metabolism: it produces dUMP, the immediate precursor of thymidine nucleotides and it decreases the intracellular concentration of dUTP so that uracil cannot be incorporated into DNA. This Gluconobacter oxydans (strain 621H) (Gluconobacter suboxydans) protein is Deoxyuridine 5'-triphosphate nucleotidohydrolase.